The chain runs to 1220 residues: von Willebrand factor A domain-containing protein 5B1 (1220 aa).

An N-terminal signal peptide occupies residues 1–18 (MPGLLNWITGAALPLTAS). The VIT domain occupies 19 to 149 (DVTSCVSGYA…NVTIFISTSS (131 aa)). Asparagine 140 is a glycosylation site (N-linked (GlcNAc...) asparagine). Positions 361 to 529 (EFIFLIDRSS…RLQPKMVKSL (169 aa)) constitute a VWFA domain. Residue asparagine 650 is glycosylated (N-linked (GlcNAc...) asparagine). Residues 715 to 807 (NSGQDLNQGP…SPSRPATPAP (93 aa)) are disordered. Residues 757–774 (VRERTSDSRSPGDLEPSH) show a composition bias toward basic and acidic residues. The span at 796-807 (RASPSRPATPAP) shows a compositional bias: low complexity. Position 881 is a phosphotyrosine (tyrosine 881). Disordered stretches follow at residues 937–962 (RGTS…GKFQ) and 976–995 (EARS…QRSL). A glycan (N-linked (GlcNAc...) asparagine) is linked at asparagine 1017. The span at 1093–1111 (TTRPSESKTPSPQLCTSSP) shows a compositional bias: polar residues. Residues 1093–1115 (TTRPSESKTPSPQLCTSSPPRHP) form a disordered region.

Its subcellular location is the secreted. The polypeptide is von Willebrand factor A domain-containing protein 5B1 (VWA5B1) (Homo sapiens (Human)).